We begin with the raw amino-acid sequence, 494 residues long: Alpha-amylase-related protein (494 aa).

A signal peptide spans 1 to 20 (MIKFALALTLCLAGASLSLA). At Q21 the chain carries Pyrrolidone carboxylic acid. Cysteines 48 and 104 form a disulfide. Ca(2+) contacts are provided by N118, Q169, and D178. Cysteines 157 and 171 form a disulfide. R206 is a chloride binding site. D208 functions as the Nucleophile in the catalytic mechanism. H212 is a Ca(2+) binding site. E245 (proton donor) is an active-site residue. Residues N308 and R343 each contribute to the chloride site. 3 cysteine pairs are disulfide-bonded: C376-C382, C418-C441, and C448-C460.

This sequence belongs to the glycosyl hydrolase 13 family. In terms of assembly, monomer. It depends on Ca(2+) as a cofactor. Chloride serves as cofactor.

The protein localises to the secreted. It carries out the reaction Endohydrolysis of (1-&gt;4)-alpha-D-glucosidic linkages in polysaccharides containing three or more (1-&gt;4)-alpha-linked D-glucose units.. The chain is Alpha-amylase-related protein (Amyrel) from Drosophila jambulina (Fruit fly).